We begin with the raw amino-acid sequence, 624 residues long: Protein NRT1/ PTR FAMILY 6.1 (624 aa).

The interval 1–20 (MVASEIKSPVSVPETPGSSS) is disordered. The next 2 membrane-spanning stretches (helical) occupy residues 83–100 (MAYFGLSVNMVAFMFYVM) and 114–134 (FLGISQASSVLGGFLADAYLG). Residue T138 is modified to Phosphothreonine. The next 10 membrane-spanning stretches (helical) occupy residues 139–159 (IAIFTTMYLVGLIGITLGASL), 184–204 (SWQMLYLYTVLYITGFGAAGI), 230–250 (FFNFFYLSVTLGAIIAFTLVV), 258–278 (WGMAFGTLAVAMGISNALFFA), 378–398 (LIPIPTCTIMLSLVLTEYLTL), 422–442 (VFPGLSIFLILSLYYSVFVPI), 459–479 (VGIGLAVSIISVAWAGLFENY), 504–524 (WLLIQYCLIGIAEVFCIVGLL), 537–557 (SIGSAYAALAGGLGCFAATIL), and 585–605 (CLYWLLTLLSFLNFCVFLWSA).

The protein belongs to the major facilitator superfamily. Proton-dependent oligopeptide transporter (POT/PTR) (TC 2.A.17) family. As to expression, expressed in flower and siliques.

It localises to the membrane. This is Protein NRT1/ PTR FAMILY 6.1 (NPF6.1) from Arabidopsis thaliana (Mouse-ear cress).